A 957-amino-acid chain; its full sequence is Glycine dehydrogenase (decarboxylating) (957 aa).

Position 708 is an N6-(pyridoxal phosphate)lysine (Lys-708).

This sequence belongs to the GcvP family. The glycine cleavage system is composed of four proteins: P, T, L and H. The cofactor is pyridoxal 5'-phosphate.

It carries out the reaction N(6)-[(R)-lipoyl]-L-lysyl-[glycine-cleavage complex H protein] + glycine + H(+) = N(6)-[(R)-S(8)-aminomethyldihydrolipoyl]-L-lysyl-[glycine-cleavage complex H protein] + CO2. In terms of biological role, the glycine cleavage system catalyzes the degradation of glycine. The P protein binds the alpha-amino group of glycine through its pyridoxal phosphate cofactor; CO(2) is released and the remaining methylamine moiety is then transferred to the lipoamide cofactor of the H protein. In Salmonella newport (strain SL254), this protein is Glycine dehydrogenase (decarboxylating).